The primary structure comprises 104 residues: MMLKPSIDTLLDKVPSKYSLVILEAKRAHELEAGAPATQGFKSEKSTLRALEEIESGNVTIHPDPEGKREAVRRRIEEEKRRKEEEEKKIKEQIAKEKEDGEKI.

Residues 53–104 form a disordered region; that stretch reads EIESGNVTIHPDPEGKREAVRRRIEEEKRRKEEEEKKIKEQIAKEKEDGEKI. The segment covering 63 to 104 has biased composition (basic and acidic residues); it reads PDPEGKREAVRRRIEEEKRRKEEEEKKIKEQIAKEKEDGEKI.

The protein belongs to the RNA polymerase subunit omega family. In terms of assembly, the RNAP catalytic core consists of 2 alpha, 1 beta, 1 beta' and 1 omega subunit. When a sigma factor is associated with the core the holoenzyme is formed, which can initiate transcription.

The enzyme catalyses RNA(n) + a ribonucleoside 5'-triphosphate = RNA(n+1) + diphosphate. Promotes RNA polymerase assembly. Latches the N- and C-terminal regions of the beta' subunit thereby facilitating its interaction with the beta and alpha subunits. This chain is DNA-directed RNA polymerase subunit omega, found in Streptococcus pneumoniae serotype 2 (strain D39 / NCTC 7466).